Reading from the N-terminus, the 308-residue chain is Ribonuclease HIII (308 aa).

An RNase H type-2 domain is found at 88-304; that stretch reads FHCIGSDEAG…RDKAIHLINQ (217 aa). Residues D94, E95, and D199 each coordinate a divalent metal cation.

This sequence belongs to the RNase HII family. RnhC subfamily. Requires Mn(2+) as cofactor. It depends on Mg(2+) as a cofactor.

The protein resides in the cytoplasm. It carries out the reaction Endonucleolytic cleavage to 5'-phosphomonoester.. Functionally, endonuclease that specifically degrades the RNA of RNA-DNA hybrids. The chain is Ribonuclease HIII from Staphylococcus epidermidis (strain ATCC 35984 / DSM 28319 / BCRC 17069 / CCUG 31568 / BM 3577 / RP62A).